We begin with the raw amino-acid sequence, 158 residues long: Transcription elongation factor GreA (158 aa).

Belongs to the GreA/GreB family.

In terms of biological role, necessary for efficient RNA polymerase transcription elongation past template-encoded arresting sites. The arresting sites in DNA have the property of trapping a certain fraction of elongating RNA polymerases that pass through, resulting in locked ternary complexes. Cleavage of the nascent transcript by cleavage factors such as GreA or GreB allows the resumption of elongation from the new 3'terminus. GreA releases sequences of 2 to 3 nucleotides. The protein is Transcription elongation factor GreA of Agrobacterium fabrum (strain C58 / ATCC 33970) (Agrobacterium tumefaciens (strain C58)).